The chain runs to 337 residues: Glyceraldehyde-3-phosphate dehydrogenase 3, cytosolic (337 aa).

The interval 1–151 (MAKIKIGING…YKSDINIVSN (151 aa)) is binding to NAD. Residues 13-14 (RI), aspartate 35, and arginine 82 each bind NAD(+). The interval 152 to 337 (ASCTTNCLAP…DLIRHMNSTK (186 aa)) is catalytic. D-glyceraldehyde 3-phosphate is bound by residues 153-155 (SCT), threonine 184, 213-214 (TG), and arginine 236. The active-site Nucleophile is cysteine 154. Residue asparagine 318 participates in NAD(+) binding.

This sequence belongs to the glyceraldehyde-3-phosphate dehydrogenase family. In terms of assembly, homotetramer.

Its subcellular location is the cytoplasm. It catalyses the reaction D-glyceraldehyde 3-phosphate + phosphate + NAD(+) = (2R)-3-phospho-glyceroyl phosphate + NADH + H(+). It functions in the pathway carbohydrate degradation; glycolysis; pyruvate from D-glyceraldehyde 3-phosphate: step 1/5. Functionally, key enzyme in glycolysis that catalyzes the first step of the pathway by converting D-glyceraldehyde 3-phosphate (G3P) into 3-phospho-D-glyceroyl phosphate. Essential for the maintenance of cellular ATP levels and carbohydrate metabolism. This chain is Glyceraldehyde-3-phosphate dehydrogenase 3, cytosolic (GAPC3), found in Zea mays (Maize).